We begin with the raw amino-acid sequence, 196 residues long: ATP-dependent Clp protease proteolytic subunit (196 aa).

Catalysis depends on serine 98, which acts as the Nucleophile. Residue histidine 123 is part of the active site.

This sequence belongs to the peptidase S14 family. Fourteen ClpP subunits assemble into 2 heptameric rings which stack back to back to give a disk-like structure with a central cavity, resembling the structure of eukaryotic proteasomes.

The protein resides in the cytoplasm. The catalysed reaction is Hydrolysis of proteins to small peptides in the presence of ATP and magnesium. alpha-casein is the usual test substrate. In the absence of ATP, only oligopeptides shorter than five residues are hydrolyzed (such as succinyl-Leu-Tyr-|-NHMec, and Leu-Tyr-Leu-|-Tyr-Trp, in which cleavage of the -Tyr-|-Leu- and -Tyr-|-Trp bonds also occurs).. In terms of biological role, cleaves peptides in various proteins in a process that requires ATP hydrolysis. Has a chymotrypsin-like activity. Plays a major role in the degradation of misfolded proteins. The chain is ATP-dependent Clp protease proteolytic subunit from Anoxybacillus flavithermus (strain DSM 21510 / WK1).